The chain runs to 312 residues: tRNA pseudouridine synthase B (312 aa).

The Nucleophile role is filled by Asp-47.

Belongs to the pseudouridine synthase TruB family. Type 1 subfamily.

The enzyme catalyses uridine(55) in tRNA = pseudouridine(55) in tRNA. Responsible for synthesis of pseudouridine from uracil-55 in the psi GC loop of transfer RNAs. In Vibrio cholerae serotype O1 (strain M66-2), this protein is tRNA pseudouridine synthase B.